A 247-amino-acid polypeptide reads, in one-letter code: Coproheme decarboxylase (247 aa).

Residues arginine 129, 143–147 (YPMDK), histidine 170, glutamine 183, and serine 221 contribute to the Fe-coproporphyrin III site. The active site involves tyrosine 143.

It belongs to the ChdC family. Type 1 subfamily. Requires Fe-coproporphyrin III as cofactor.

It catalyses the reaction Fe-coproporphyrin III + 2 H2O2 + 2 H(+) = heme b + 2 CO2 + 4 H2O. It carries out the reaction Fe-coproporphyrin III + H2O2 + H(+) = harderoheme III + CO2 + 2 H2O. The catalysed reaction is harderoheme III + H2O2 + H(+) = heme b + CO2 + 2 H2O. Its pathway is porphyrin-containing compound metabolism; protoheme biosynthesis. Its function is as follows. Involved in coproporphyrin-dependent heme b biosynthesis. Catalyzes the decarboxylation of Fe-coproporphyrin III (coproheme) to heme b (protoheme IX), the last step of the pathway. The reaction occurs in a stepwise manner with a three-propionate intermediate. The polypeptide is Coproheme decarboxylase (Bacillus cereus (strain ATCC 10987 / NRS 248)).